The following is a 320-amino-acid chain: tRNA (guanine(10)-N2)-dimethyltransferase (320 aa).

Residues 46-136 (EKFFERLAYT…DDKCYVGLLE (91 aa)) enclose the THUMP domain.

The protein belongs to the methyltransferase superfamily. Trm-G10 family. As to quaternary structure, monomer.

The protein resides in the cytoplasm. The enzyme catalyses guanosine(10) in tRNA + 2 S-adenosyl-L-methionine = N(2)-dimethylguanosine(10) in tRNA + 2 S-adenosyl-L-homocysteine + 2 H(+). Catalyzes the adenosylmethionine-dependent methylation of the exocyclic amino group (N(2)) of guanosine at position 10 of various tRNAs. Acts via a two-step process that leads to the formation of either N(2)-monomethyl (m(2)G) or N(2)-dimethylguanosine (m(2)(2)G). This Archaeoglobus fulgidus (strain ATCC 49558 / DSM 4304 / JCM 9628 / NBRC 100126 / VC-16) protein is tRNA (guanine(10)-N2)-dimethyltransferase (trmG10).